Reading from the N-terminus, the 204-residue chain is Leucyl/phenylalanyl-tRNA--protein transferase (204 aa).

Belongs to the L/F-transferase family.

It localises to the cytoplasm. The enzyme catalyses N-terminal L-lysyl-[protein] + L-leucyl-tRNA(Leu) = N-terminal L-leucyl-L-lysyl-[protein] + tRNA(Leu) + H(+). It catalyses the reaction N-terminal L-arginyl-[protein] + L-leucyl-tRNA(Leu) = N-terminal L-leucyl-L-arginyl-[protein] + tRNA(Leu) + H(+). The catalysed reaction is L-phenylalanyl-tRNA(Phe) + an N-terminal L-alpha-aminoacyl-[protein] = an N-terminal L-phenylalanyl-L-alpha-aminoacyl-[protein] + tRNA(Phe). Its function is as follows. Functions in the N-end rule pathway of protein degradation where it conjugates Leu, Phe and, less efficiently, Met from aminoacyl-tRNAs to the N-termini of proteins containing an N-terminal arginine or lysine. The protein is Leucyl/phenylalanyl-tRNA--protein transferase of Rhizobium leguminosarum bv. trifolii (strain WSM2304).